The following is a 162-amino-acid chain: MRVHQPETIEMTVPAKSEFVGVVRLTVSGIANRLGYTYDDIEDIKIAVAEACTNVVDHAYDEGGTMGLSFHLYEDRMEIIVTDQGQSFDMDAFRESLGPIDGSKPIQDLKEGGLGLFLINTLMDKVEMKEDSGVVLAMTKFLQRDEVDNRVDGISATQTEQR.

It belongs to the anti-sigma-factor family.

The enzyme catalyses L-seryl-[protein] + ATP = O-phospho-L-seryl-[protein] + ADP + H(+). It carries out the reaction L-threonyl-[protein] + ATP = O-phospho-L-threonyl-[protein] + ADP + H(+). Its function is as follows. Negative regulator of sigma-B activity. Phosphorylates and inactivates its specific antagonist protein, RsbV. Upon phosphorylation of RsbV, RsbW is released and binds to sigma-B, thereby blocking its ability to form an RNA polymerase holoenzyme (E-sigma-B). The protein is Serine-protein kinase RsbW of Halalkalibacterium halodurans (strain ATCC BAA-125 / DSM 18197 / FERM 7344 / JCM 9153 / C-125) (Bacillus halodurans).